The sequence spans 308 residues: Lipoyl synthase (308 aa).

Residues C51, C56, C62, C77, C81, C84, and S290 each coordinate [4Fe-4S] cluster. Residues 63–279 (WSKRHATFMI…ETIAKSKGFL (217 aa)) enclose the Radical SAM core domain.

This sequence belongs to the radical SAM superfamily. Lipoyl synthase family. It depends on [4Fe-4S] cluster as a cofactor.

It localises to the cytoplasm. The catalysed reaction is [[Fe-S] cluster scaffold protein carrying a second [4Fe-4S](2+) cluster] + N(6)-octanoyl-L-lysyl-[protein] + 2 oxidized [2Fe-2S]-[ferredoxin] + 2 S-adenosyl-L-methionine + 4 H(+) = [[Fe-S] cluster scaffold protein] + N(6)-[(R)-dihydrolipoyl]-L-lysyl-[protein] + 4 Fe(3+) + 2 hydrogen sulfide + 2 5'-deoxyadenosine + 2 L-methionine + 2 reduced [2Fe-2S]-[ferredoxin]. It participates in protein modification; protein lipoylation via endogenous pathway; protein N(6)-(lipoyl)lysine from octanoyl-[acyl-carrier-protein]: step 2/2. Its function is as follows. Catalyzes the radical-mediated insertion of two sulfur atoms into the C-6 and C-8 positions of the octanoyl moiety bound to the lipoyl domains of lipoate-dependent enzymes, thereby converting the octanoylated domains into lipoylated derivatives. The sequence is that of Lipoyl synthase from Pelagibacter ubique (strain HTCC1062).